The sequence spans 124 residues: Small ribosomal subunit protein bS6 (124 aa).

Belongs to the bacterial ribosomal protein bS6 family.

Functionally, binds together with bS18 to 16S ribosomal RNA. The chain is Small ribosomal subunit protein bS6 from Campylobacter lari (strain RM2100 / D67 / ATCC BAA-1060).